A 282-amino-acid polypeptide reads, in one-letter code: NAD kinase (282 aa).

The active-site Proton acceptor is the aspartate 67. NAD(+) contacts are provided by residues 67 to 68, 140 to 141, histidine 151, arginine 170, aspartate 172, and 183 to 188; these read DG, NE, and TAYNLS.

Belongs to the NAD kinase family. It depends on a divalent metal cation as a cofactor.

It localises to the cytoplasm. The catalysed reaction is NAD(+) + ATP = ADP + NADP(+) + H(+). Its function is as follows. Involved in the regulation of the intracellular balance of NAD and NADP, and is a key enzyme in the biosynthesis of NADP. Catalyzes specifically the phosphorylation on 2'-hydroxyl of the adenosine moiety of NAD to yield NADP. The polypeptide is NAD kinase (Halobacterium salinarum (strain ATCC 700922 / JCM 11081 / NRC-1) (Halobacterium halobium)).